A 301-amino-acid chain; its full sequence is uncharacterized protein (301 aa).

Topologically, residues 1 to 5 are extracellular; it reads MSYKK. Residues 6 to 26 form a helical membrane-spanning segment; the sequence is FVYFINLFFLLGATLLTFFLI. Over 27-112 the chain is Cytoplasmic; sequence LAGGRTTGVL…NRNAYYYLSR (86 aa). A helical transmembrane segment spans residues 113-133; the sequence is VGWAMLLIGLFFLLITLVSVI. Residues 134–143 lie on the Extracellular side of the membrane; the sequence is ASLIRYNRRT. The helical transmembrane segment at 144–164 threads the bilayer; sequence AALATAMSWITLFFITLSACL. Residues 165–191 lie on the Cytoplasmic side of the membrane; the sequence is YTGCYAKAVKAFHHENRDARLGPKNFG. The chain crosses the membrane as a helical span at residues 192–212; it reads LIWTTVFLLIVNAICCTIMVA. The Extracellular portion of the chain corresponds to 213 to 301; it reads THKRNEYIYD…YTEQNVPVVS (89 aa). Positions 254-301 are disordered; it reads VQQSQSHQNHRFFKKLRTKKRTVTSAGDEPDRVQEERVYTEQNVPVVS. Over residues 261–275 the composition is skewed to basic residues; the sequence is QNHRFFKKLRTKKRT. Positions 282 to 292 are enriched in basic and acidic residues; sequence EPDRVQEERVY.

Belongs to the SUR7 family.

It is found in the cell membrane. In terms of biological role, involved in sporulation and affects the sphingolipid composition of the plasma membrane. This is an uncharacterized protein from Saccharomyces cerevisiae (strain ATCC 204508 / S288c) (Baker's yeast).